Here is a 289-residue protein sequence, read N- to C-terminus: Protease HtpX homolog (289 aa).

2 helical membrane-spanning segments follow: residues 11 to 31 (AALFGVLWAVLLGLGAIIAAG) and 34 to 54 (STTPIWIMALIGVATTAYGYW). Position 138 (His-138) interacts with Zn(2+). The active site involves Glu-139. Zn(2+) is bound at residue His-142. The next 2 membrane-spanning stretches (helical) occupy residues 152 to 172 (SVVAAVAGVITSVGQMLLIFG) and 182 to 202 (LATIAMALLAPFAASLIQMAI). Glu-207 is a Zn(2+) binding site.

It belongs to the peptidase M48B family. It depends on Zn(2+) as a cofactor.

The protein localises to the cell membrane. This is Protease HtpX homolog from Paenarthrobacter aurescens (strain TC1).